Consider the following 254-residue polypeptide: 5-oxoprolinase subunit A (254 aa).

Belongs to the LamB/PxpA family. Forms a complex composed of PxpA, PxpB and PxpC.

The enzyme catalyses 5-oxo-L-proline + ATP + 2 H2O = L-glutamate + ADP + phosphate + H(+). Its function is as follows. Catalyzes the cleavage of 5-oxoproline to form L-glutamate coupled to the hydrolysis of ATP to ADP and inorganic phosphate. This Gluconobacter oxydans (strain 621H) (Gluconobacter suboxydans) protein is 5-oxoprolinase subunit A.